The sequence spans 117 residues: uncharacterized protein (117 aa).

This sequence belongs to the transposase 34 family.

This is an uncharacterized protein from Sinorhizobium fredii (strain NBRC 101917 / NGR234).